The sequence spans 688 residues: MSAELFLEIGTEEIPAGFLPTAMADLERLIRKELETGRIGFETVRTFATPRRLVLAVTGVASGQARQEVTASGPSVSVAFDADGNPTKAALGFARSNGVEVSDLERRETDKGEYLFVSKVVEGRPTGELLPEMLPRIIAAIPFKKSMRWKDLDIRFARPMHWIVALFDGQVVPFSYGNLTSGNLSYGHRFMAPDAFEVSSLEQYLVEAEKHFVIVDPVKRRQIISDQLAEVVGRCGGKLNPDDDLLDEVAFLVEYPAAVMGGFEDSYLQLPPELLITVMREHQRYFTVVDDSGKLLPRFITISNTRAEDLTVVQQGNERVLRARLSDAMFFWNEDRKVKLESRLDALKNVVYQAKLGTSYEKVMRFKTLAVELAQQQVPEVVELTERAASLAKCDLETGMVFEFTELQGVMGREYALLDGEDPRVARAIFEHYLPVQAGGELPGDDVGAFVSIADKIDSICGCFGVGLIPTGTADPFALRRSAIGILNIILDRGYRLSLPALVERSLGLLADKLTRPATEVAADVLEFLRLRFFNMLTAQGLPNDVVDAVLSAAFEDPVDALQRVKGLASFREEGEFEALAVTFKRVVNIVKGGVDTSVDSALFEADCEAGLFDALQNVTGRFEQFVAEGAYLDALRTVGGLRSPVDALFEGVMVMSPDEAVKTNRLALLTAVARLFQGIADFSKIAA.

It belongs to the class-II aminoacyl-tRNA synthetase family. Tetramer of two alpha and two beta subunits.

It is found in the cytoplasm. The enzyme catalyses tRNA(Gly) + glycine + ATP = glycyl-tRNA(Gly) + AMP + diphosphate. In Syntrophotalea carbinolica (strain DSM 2380 / NBRC 103641 / GraBd1) (Pelobacter carbinolicus), this protein is Glycine--tRNA ligase beta subunit.